The sequence spans 393 residues: Chorismate synthase (393 aa).

NADP(+) contacts are provided by R40 and R46. FMN is bound by residues 135-137, 257-258, G301, 316-320, and R342; these read RAS, QA, and KPIAT. Residues 280-306 are disordered; that stretch reads DEIDVGPDGIRRRSNRAGGVEGGMSTG.

It belongs to the chorismate synthase family. In terms of assembly, homotetramer. Requires FMNH2 as cofactor.

It catalyses the reaction 5-O-(1-carboxyvinyl)-3-phosphoshikimate = chorismate + phosphate. The protein operates within metabolic intermediate biosynthesis; chorismate biosynthesis; chorismate from D-erythrose 4-phosphate and phosphoenolpyruvate: step 7/7. Catalyzes the anti-1,4-elimination of the C-3 phosphate and the C-6 proR hydrogen from 5-enolpyruvylshikimate-3-phosphate (EPSP) to yield chorismate, which is the branch point compound that serves as the starting substrate for the three terminal pathways of aromatic amino acid biosynthesis. This reaction introduces a second double bond into the aromatic ring system. The chain is Chorismate synthase from Thermobifida fusca (strain YX).